Here is a 1494-residue protein sequence, read N- to C-terminus: Ral GTPase-activating protein subunit beta (1494 aa).

Disordered regions lie at residues 355 to 437 and 709 to 738; these read PRSD…APRR and ENNL…PDSE. Ser359 carries the phosphoserine modification. Residues Thr363 and Thr379 each carry the phosphothreonine modification. Polar residues-rich tracts occupy residues 369–381, 392–428, and 711–735; these read SMPQ…TTPP, NKAT…TSSE, and NLKS…PTTP. 2 positions are modified to phosphoserine: Ser421 and Ser720. Thr734 is modified (phosphothreonine). One can recognise a Rap-GAP domain in the interval 1149–1392; the sequence is IGYLDLLPCR…TTLEKEVPVI (244 aa). Ser1285 carries the post-translational modification Phosphoserine. The span at 1312–1323 shows a compositional bias: polar residues; the sequence is NLNSSQRLSPSS. A disordered region spans residues 1312–1335; it reads NLNSSQRLSPSSRMRKLPQGRPVP.

As to quaternary structure, component of the heterodimeric RalGAP1 complex with RALGAPA1 and of the heterodimeric RalGAP2 complex with RALGAPA2. Heterodimerization is required for activity. As to expression, highly expressed in brain, mostly in amygdala.

Its function is as follows. Non-catalytic subunit of the heterodimeric RalGAP1 and RalGAP2 complexes which act as GTPase activators for the Ras-like small GTPases RALA and RALB. This is Ral GTPase-activating protein subunit beta (RALGAPB) from Homo sapiens (Human).